Consider the following 431-residue polypeptide: Protein translocase subunit SecY (431 aa).

At 1–17 the chain is on the cytoplasmic side; that stretch reads MFKTISNFMRVSDIRNK. Residues 18-38 form a helical membrane-spanning segment; the sequence is IIFTLLMLIVFRIGAFIPVPY. The Extracellular segment spans residues 39–66; it reads VNAEALQAQSQMGVFDLLNTFGGGALYQ. Residues 67 to 87 traverse the membrane as a helical segment; the sequence is FSIFAMGITPYITASIIIQLL. The Cytoplasmic portion of the chain corresponds to 88 to 115; that stretch reads QMDVVPKFTEWSKQGEVGRRKLAQFTRY. A helical membrane pass occupies residues 116–136; that stretch reads FTIVLGFIQALGMSYGFNNLA. Residues 137–145 lie on the Extracellular side of the membrane; sequence NGMLIEKSG. The chain crosses the membrane as a helical span at residues 146–166; it reads VSTYLIIALVLTGGTAFLMWL. Residues 167 to 177 lie on the Cytoplasmic side of the membrane; sequence GEQITSHGVGN. A helical membrane pass occupies residues 178–198; it reads GISIIIFAGIVSSIPKTIGQI. Residues 199–213 lie on the Extracellular side of the membrane; it reads YETQFVGSNDQLFIH. Residues 214–234 form a helical membrane-spanning segment; it reads IVKVALLVIAILAVIVGVIFI. Over 235–261 the chain is Cytoplasmic; that stretch reads QQAVRKIAIQYAKGTGRSPAGGGQSTH. Residues 262-282 traverse the membrane as a helical segment; sequence LPLKVNPAGVIPVIFAVAFLI. At 283-308 the chain is on the extracellular side; it reads TPRTIASFFGTNDVTKWIQNNFDNTH. A helical membrane pass occupies residues 309-329; that stretch reads PVGMAIYVALIIAFTYFYAFV. Over 330–368 the chain is Cytoplasmic; sequence QVNPEQMADNLKKQGGYIPGVRPGKMTQDRITSILYRLT. Helical transmembrane passes span 369–389 and 390–410; these read FVGSIFLAVISILPIFFIQFA and GLPQSAQIGGTSLLIVVGVAL. Residues 411–431 lie on the Cytoplasmic side of the membrane; the sequence is ETMKQLESQLVKRNYRGFMKN.

The protein belongs to the SecY/SEC61-alpha family. As to quaternary structure, component of the Sec protein translocase complex. Heterotrimer consisting of SecY, SecE and SecG subunits. The heterotrimers can form oligomers, although 1 heterotrimer is thought to be able to translocate proteins. Interacts with the ribosome. Interacts with SecDF, and other proteins may be involved. Interacts with SecA. Interacts with FloT.

Its subcellular location is the cell membrane. It is found in the membrane raft. In terms of biological role, the central subunit of the protein translocation channel SecYEG. Consists of two halves formed by TMs 1-5 and 6-10. These two domains form a lateral gate at the front which open onto the bilayer between TMs 2 and 7, and are clamped together by SecE at the back. The channel is closed by both a pore ring composed of hydrophobic SecY resides and a short helix (helix 2A) on the extracellular side of the membrane which forms a plug. The plug probably moves laterally to allow the channel to open. The ring and the pore may move independently. The protein is Protein translocase subunit SecY of Bacillus subtilis (strain 168).